A 473-amino-acid chain; its full sequence is Ribulose bisphosphate carboxylase large chain (473 aa).

Substrate contacts are provided by Asn-116 and Thr-166. The active-site Proton acceptor is Lys-168. Lys-170 serves as a coordination point for substrate. Mg(2+) contacts are provided by Lys-194, Asp-196, and Glu-197. An N6-carboxylysine modification is found at Lys-194. His-287 (proton acceptor) is an active-site residue. Residues Arg-288, His-320, and Ser-372 each coordinate substrate.

This sequence belongs to the RuBisCO large chain family. Type I subfamily. Heterohexadecamer of 8 large chains and 8 small chains. The cofactor is Mg(2+).

It catalyses the reaction 2 (2R)-3-phosphoglycerate + 2 H(+) = D-ribulose 1,5-bisphosphate + CO2 + H2O. The catalysed reaction is D-ribulose 1,5-bisphosphate + O2 = 2-phosphoglycolate + (2R)-3-phosphoglycerate + 2 H(+). Functionally, ruBisCO catalyzes two reactions: the carboxylation of D-ribulose 1,5-bisphosphate, the primary event in carbon dioxide fixation, as well as the oxidative fragmentation of the pentose substrate. Both reactions occur simultaneously and in competition at the same active site. The polypeptide is Ribulose bisphosphate carboxylase large chain (Nitrosospira sp. (strain TCH716)).